Here is a 528-residue protein sequence, read N- to C-terminus: Major facilitator superfamily multidrug transporter mdr3 (528 aa).

Residues 1-37 (MLAMAASAEETNRQSNAGRRSVISPSEAPPEAEQSDV) are disordered. Transmembrane regions (helical) follow at residues 50 to 70 (FILI…YILI), 91 to 111 (WHVG…GKLG), 119 to 139 (ILVL…CSAF), 149 to 169 (ARAL…AIAG), 180 to 200 (MIFS…GVVG), 211 to 231 (WVMW…LWVI), and 241 to 261 (AATL…LLLL). Residue Asn262 is glycosylated (N-linked (GlcNAc...) asparagine). 5 consecutive transmembrane segments (helical) span residues 272–292 (GWST…LGLF), 340–360 (VITS…GCIL), 375–395 (FWSF…STTI), 410–430 (SLVN…AGTV), and 448–468 (ALWS…VFAV).

Belongs to the major facilitator superfamily.

It localises to the cell membrane. In terms of biological role, major facilitator superfamily transporter that confers resistance to azoles such as itraconazole. This chain is Major facilitator superfamily multidrug transporter mdr3, found in Aspergillus fumigatus (strain ATCC MYA-4609 / CBS 101355 / FGSC A1100 / Af293) (Neosartorya fumigata).